The sequence spans 1128 residues: GTPase-activating protein BEM3 (1128 aa).

The interval 194–241 (SSPTKIHSEQLASPAASVTYTTSRITIKSPNKGSKSPLQERLRSPQNP) is disordered. Positions 209–230 (ASVTYTTSRITIKSPNKGSKSP) are enriched in polar residues. S254 carries the phosphoserine modification. Disordered regions lie at residues 345–391 (EDLV…TPLS) and 418–486 (PVLT…RPHA). The segment covering 366–375 (LPPPPAPPTF) has biased composition (pro residues). 2 stretches are compositionally biased toward polar residues: residues 382–391 (GNIKNSTPLS) and 420–478 (LTSS…QGSL). Positions 634–741 (DNVKDGSLLL…WLSAFSDYID (108 aa)) constitute a PH domain. 2 disordered regions span residues 746–777 (LSLSSSRNANDTDSASHLSAGTHHSKFGNATI) and 796–838 (NNNI…DSRR). The segment covering 752 to 764 (RNANDTDSASHLS) has biased composition (polar residues). Low complexity predominate over residues 796–815 (NNNISNSSNNIANSDGIDSN). Over residues 816–829 (PSSHSNFLASSSGN) the composition is skewed to polar residues. One can recognise a Rho-GAP domain in the interval 913–1128 (LRLSSHKYQN…EKVDIHIPQV (216 aa)).

The protein resides in the cytoplasm. Functionally, GTPase-activating protein (GAP) for CDC42 and less efficiently for RHO1. Negative regulator of the pheromone-response pathway through the STE20 protein kinase. The chain is GTPase-activating protein BEM3 (BEM3) from Saccharomyces cerevisiae (strain ATCC 204508 / S288c) (Baker's yeast).